The chain runs to 256 residues: 5'-nucleotidase SurE (256 aa).

A divalent metal cation contacts are provided by Asp8, Asp9, Ser40, and Asn92.

Belongs to the SurE nucleotidase family. A divalent metal cation is required as a cofactor.

Its subcellular location is the cytoplasm. It catalyses the reaction a ribonucleoside 5'-phosphate + H2O = a ribonucleoside + phosphate. Its function is as follows. Nucleotidase that shows phosphatase activity on nucleoside 5'-monophosphates. The polypeptide is 5'-nucleotidase SurE (Sinorhizobium medicae (strain WSM419) (Ensifer medicae)).